The chain runs to 426 residues: Serine hydroxymethyltransferase (426 aa).

(6S)-5,6,7,8-tetrahydrofolate is bound by residues Leu-113 and 117-119 (GHL). The residue at position 222 (Lys-222) is an N6-(pyridoxal phosphate)lysine. 363–365 (SAF) is a binding site for (6S)-5,6,7,8-tetrahydrofolate.

The protein belongs to the SHMT family. In terms of assembly, homodimer. Requires pyridoxal 5'-phosphate as cofactor.

Its subcellular location is the cytoplasm. The enzyme catalyses (6R)-5,10-methylene-5,6,7,8-tetrahydrofolate + glycine + H2O = (6S)-5,6,7,8-tetrahydrofolate + L-serine. It functions in the pathway one-carbon metabolism; tetrahydrofolate interconversion. Its pathway is amino-acid biosynthesis; glycine biosynthesis; glycine from L-serine: step 1/1. Catalyzes the reversible interconversion of serine and glycine with tetrahydrofolate (THF) serving as the one-carbon carrier. This reaction serves as the major source of one-carbon groups required for the biosynthesis of purines, thymidylate, methionine, and other important biomolecules. Also exhibits THF-independent aldolase activity toward beta-hydroxyamino acids, producing glycine and aldehydes, via a retro-aldol mechanism. The protein is Serine hydroxymethyltransferase of Phocaeicola vulgatus (strain ATCC 8482 / DSM 1447 / JCM 5826 / CCUG 4940 / NBRC 14291 / NCTC 11154) (Bacteroides vulgatus).